A 254-amino-acid chain; its full sequence is Undecaprenyl-diphosphatase (254 aa).

8 helical membrane-spanning segments follow: residues Met-1–Ile-21, Leu-41–Tyr-61, Ile-70–Phe-90, Leu-97–Val-117, Val-134–Thr-154, Ala-175–Leu-195, Phe-209–Val-229, and Phe-234–Leu-254.

This sequence belongs to the UppP family.

The protein localises to the cell inner membrane. It catalyses the reaction di-trans,octa-cis-undecaprenyl diphosphate + H2O = di-trans,octa-cis-undecaprenyl phosphate + phosphate + H(+). In terms of biological role, catalyzes the dephosphorylation of undecaprenyl diphosphate (UPP). Confers resistance to bacitracin. The protein is Undecaprenyl-diphosphatase of Sulfurovum sp. (strain NBC37-1).